A 132-amino-acid polypeptide reads, in one-letter code: Inactive D-aminoacyl-tRNA deacylase (132 aa).

The protein belongs to the DTD family.

In terms of biological role, a non-functional D-aminoacyl-tRNA deacylase. This chain is Inactive D-aminoacyl-tRNA deacylase, found in Bacillus subtilis (strain 168).